The following is a 222-amino-acid chain: GTP cyclohydrolase 1 (222 aa).

3 residues coordinate Zn(2+): Cys-111, His-114, and Cys-182.

The protein belongs to the GTP cyclohydrolase I family. Toroid-shaped homodecamer, composed of two pentamers of five dimers.

It carries out the reaction GTP + H2O = 7,8-dihydroneopterin 3'-triphosphate + formate + H(+). The protein operates within cofactor biosynthesis; 7,8-dihydroneopterin triphosphate biosynthesis; 7,8-dihydroneopterin triphosphate from GTP: step 1/1. The sequence is that of GTP cyclohydrolase 1 from Salmonella choleraesuis (strain SC-B67).